Here is a 284-residue protein sequence, read N- to C-terminus: 4-diphosphocytidyl-2-C-methyl-D-erythritol kinase (284 aa).

Residue lysine 14 is part of the active site. Residue 98-108 participates in ATP binding; that stretch reads PMGGGLGGGSS. The active site involves aspartate 140.

Belongs to the GHMP kinase family. IspE subfamily.

It carries out the reaction 4-CDP-2-C-methyl-D-erythritol + ATP = 4-CDP-2-C-methyl-D-erythritol 2-phosphate + ADP + H(+). It participates in isoprenoid biosynthesis; isopentenyl diphosphate biosynthesis via DXP pathway; isopentenyl diphosphate from 1-deoxy-D-xylulose 5-phosphate: step 3/6. In terms of biological role, catalyzes the phosphorylation of the position 2 hydroxy group of 4-diphosphocytidyl-2C-methyl-D-erythritol. This chain is 4-diphosphocytidyl-2-C-methyl-D-erythritol kinase, found in Shewanella pealeana (strain ATCC 700345 / ANG-SQ1).